The chain runs to 127 residues: Aspartate 1-decarboxylase (127 aa).

Residue Ser25 is the Schiff-base intermediate with substrate; via pyruvic acid of the active site. A Pyruvic acid (Ser) modification is found at Ser25. Thr57 contributes to the substrate binding site. Tyr58 (proton donor) is an active-site residue. 73-75 (GAA) serves as a coordination point for substrate.

This sequence belongs to the PanD family. In terms of assembly, heterooctamer of four alpha and four beta subunits. The cofactor is pyruvate. Is synthesized initially as an inactive proenzyme, which is activated by self-cleavage at a specific serine bond to produce a beta-subunit with a hydroxyl group at its C-terminus and an alpha-subunit with a pyruvoyl group at its N-terminus.

It is found in the cytoplasm. It carries out the reaction L-aspartate + H(+) = beta-alanine + CO2. It participates in cofactor biosynthesis; (R)-pantothenate biosynthesis; beta-alanine from L-aspartate: step 1/1. In terms of biological role, catalyzes the pyruvoyl-dependent decarboxylation of aspartate to produce beta-alanine. In Bacillus cereus (strain ATCC 10987 / NRS 248), this protein is Aspartate 1-decarboxylase.